A 227-amino-acid polypeptide reads, in one-letter code: Ribosomal RNA large subunit methyltransferase E (227 aa).

S-adenosyl-L-methionine contacts are provided by G78, W80, D103, D119, and D143. Residue K183 is the Proton acceptor of the active site.

This sequence belongs to the class I-like SAM-binding methyltransferase superfamily. RNA methyltransferase RlmE family.

The protein localises to the cytoplasm. It carries out the reaction uridine(2552) in 23S rRNA + S-adenosyl-L-methionine = 2'-O-methyluridine(2552) in 23S rRNA + S-adenosyl-L-homocysteine + H(+). Functionally, specifically methylates the uridine in position 2552 of 23S rRNA at the 2'-O position of the ribose in the fully assembled 50S ribosomal subunit. The chain is Ribosomal RNA large subunit methyltransferase E from Rickettsia akari (strain Hartford).